A 315-amino-acid polypeptide reads, in one-letter code: Homoserine kinase (315 aa).

91–101 contributes to the ATP binding site; the sequence is PIGSGLGSSAS.

Belongs to the GHMP kinase family. Homoserine kinase subfamily.

It is found in the cytoplasm. The catalysed reaction is L-homoserine + ATP = O-phospho-L-homoserine + ADP + H(+). It functions in the pathway amino-acid biosynthesis; L-threonine biosynthesis; L-threonine from L-aspartate: step 4/5. Catalyzes the ATP-dependent phosphorylation of L-homoserine to L-homoserine phosphate. This Buchnera aphidicola subsp. Cinara cedri (strain Cc) protein is Homoserine kinase.